The sequence spans 120 residues: Large ribosomal subunit protein eL34 (120 aa).

This sequence belongs to the eukaryotic ribosomal protein eL34 family.

This is Large ribosomal subunit protein eL34 (RPL34) from Nicotiana tabacum (Common tobacco).